A 1683-amino-acid chain; its full sequence is Phospholipase D1 (1683 aa).

Disordered regions lie at residues 1 to 150 (MSNV…AYTQ), 173 to 198 (LKSSVNSPTPAGSGHRHNQHQHQQVN), 259 to 289 (ILDITNSNHNHRGNNNNNTGENSDRRPSIPR), and 384 to 416 (VMEKKAENKPSSAASAPHTSENNNNDNGSNITS). Position 2 is an N-acetylserine (S2). Phosphoserine is present on residues S8 and S30. Basic and acidic residues-rich tracts occupy residues 20-34 (SVTEEVDRVNSRPDE), 63-82 (NGKEAERKHALPKSFVDRNL), and 90-112 (SLDHIMHSNEHDPRRGSDEENMH). The span at 116 to 125 (NNLHSSNNNV) shows a compositional bias: low complexity. Residues 141-150 (RRSSSVAYTQ) show a composition bias toward polar residues. S145 bears the Phosphoserine mark. The segment covering 263-279 (TNSNHNHRGNNNNNTGE) has biased composition (low complexity). One can recognise a PX domain in the interval 291–487 (SSIISISSNV…EFYELSPLGN (197 aa)). The segment covering 392-404 (KPSSAASAPHTSE) has biased composition (polar residues). The segment covering 405-416 (NNNNDNGSNITS) has biased composition (low complexity). One can recognise a PH domain in the interval 496–664 (QGKQGYLVIR…SSIIKMSTST (169 aa)). PLD phosphodiesterase domains follow at residues 791–818 (YFWAHHEKFVVIDETFAFIGGTDLCYGR) and 1091–1118 (EQLYVHAKILIADDRRCIIGSANINERS). Active-site residues include H796, K798, D803, H1096, K1098, and D1103. Residues 1430 to 1465 (KDMRRHLSSSTESTRNGSNSLPLNEKSNEGESTNVD) form a disordered region. A compositionally biased stretch (polar residues) spans 1437–1451 (SSSTESTRNGSNSLP). S1461 is modified (phosphoserine). Residue T1462 is modified to Phosphothreonine.

This sequence belongs to the phospholipase D family. In terms of assembly, interacts with SRF1.

The enzyme catalyses a 1,2-diacyl-sn-glycero-3-phosphocholine + H2O = a 1,2-diacyl-sn-glycero-3-phosphate + choline + H(+). Activity is dependent of phosphatidylinositol 4,5-bisphosphate and the regulator SRF1. Inhibited by magnesium. Required for meiosis and spore formation. Seems to be involved in the coordinate induction of late meiotic events. PLD activity is induced under sporulation conditions and seems to be necessary to complete the meiotic cycle, but not for vegetative cell growth. The polypeptide is Phospholipase D1 (SPO14) (Saccharomyces cerevisiae (strain ATCC 204508 / S288c) (Baker's yeast)).